A 339-amino-acid polypeptide reads, in one-letter code: Centromere protein N (339 aa).

Phosphoserine is present on residues S226, S235, and S282.

Belongs to the CENP-N/CHL4 family. As to quaternary structure, component of the CENPA-NAC complex, at least composed of CENPA, CENPC, CENPH, CENPM, CENPN, CENPT and CENPU. The CENPA-NAC complex interacts with the CENPA-CAD complex, composed of CENPI, CENPK, CENPL, CENPO, CENPP, CENPQ, CENPR and CENPS. Interacts directly with CENPA. Identified in a centromere complex containing histones H2A, H2B and H4, and at least CENPA, CENPB, CENPC, CENPT, CENPN, HJURP, SUPT16H, SSRP1 and RSF1.

The protein localises to the nucleus. It is found in the chromosome. Its subcellular location is the centromere. The protein resides in the kinetochore. Component of the CENPA-NAC (nucleosome-associated) complex, a complex that plays a central role in assembly of kinetochore proteins, mitotic progression and chromosome segregation. The CENPA-NAC complex recruits the CENPA-CAD (nucleosome distal) complex and may be involved in incorporation of newly synthesized CENPA into centromeres. CENPN is the first protein to bind specifically to CENPA nucleosomes and the direct binding of CENPA nucleosomes by CENPN is required for centromere assembly. Required for chromosome congression and efficiently align the chromosomes on a metaphase plate. This chain is Centromere protein N (CENPN), found in Homo sapiens (Human).